A 387-amino-acid chain; its full sequence is MASILQAIRYSRGKLAIIDQLQLPYVEKFITIQTPEDAWHAIKEMRVRGAPAIAIVAALALASELNTLIVHDKLSSGAEEVKLFIREKLDYLVSSRPTAVNLSDAARKLESTISDHADTPGATGRTVAEAFIRAAEDMMTKDLDDNMRIGKNGAEWIIKHALAARKSTATVLTHCNTGSLATSGYGTALGVIRALASKKALEHAYCTETRPYNQGSRLTAFELVHDRLPATLITDSMVAALLANTKAEVDAIVVGADRVAANGDTANKIGTYGLAVLAKYHGVKFLVAAPLTTIDLGTKSGEDIVIEERPAAEVTKIRGPVDGDHSADIVKLETVHIAAKGINVWNPAFDVTPSTLIDGIITEVGVIEKGTDGQFHLERLFIDNSAS.

The Proton donor role is filled by Asp-257.

It belongs to the eIF-2B alpha/beta/delta subunits family. MtnA subfamily.

It is found in the cytoplasm. The protein resides in the nucleus. The catalysed reaction is 5-(methylsulfanyl)-alpha-D-ribose 1-phosphate = 5-(methylsulfanyl)-D-ribulose 1-phosphate. Its pathway is amino-acid biosynthesis; L-methionine biosynthesis via salvage pathway; L-methionine from S-methyl-5-thio-alpha-D-ribose 1-phosphate: step 1/6. Its function is as follows. Catalyzes the interconversion of methylthioribose-1-phosphate (MTR-1-P) into methylthioribulose-1-phosphate (MTRu-1-P). This chain is Methylthioribose-1-phosphate isomerase (mri1), found in Neosartorya fischeri (strain ATCC 1020 / DSM 3700 / CBS 544.65 / FGSC A1164 / JCM 1740 / NRRL 181 / WB 181) (Aspergillus fischerianus).